Consider the following 648-residue polypeptide: Bifunctional lysine-specific demethylase and histidyl-hydroxylase NO66 (648 aa).

Positions 1-168 (MSKVSSIFDT…KGAKAAKKNK (168 aa)) are disordered. Residues 17–28 (PATTENGAAAKP) are compositionally biased toward low complexity. A compositionally biased stretch (basic residues) spans 109 to 119 (DHRKHKEKLRK). The segment covering 123–137 (GVENSRQAAASTSML) has biased composition (polar residues). Over residues 155 to 168 (PVHHKGAKAAKKNK) the composition is skewed to basic residues. Positions 308-453 (CSIRMLNPQT…DLLELYLPHA (146 aa)) constitute a JmjC domain. The Fe cation site is built by histidine 354, aspartate 356, and histidine 419.

It belongs to the ROX family. NO66 subfamily. Fe(2+) serves as cofactor.

Its subcellular location is the nucleus. It carries out the reaction N(6),N(6)-dimethyl-L-lysyl(36)-[histone H3] + 2 2-oxoglutarate + 2 O2 = L-lysyl(36)-[histone H3] + 2 formaldehyde + 2 succinate + 2 CO2. Oxygenase that can act as both a histone lysine demethylase and a ribosomal histidine hydroxylase. Specifically demethylates 'Lys-4' (H3K4me) and 'Lys-36' (H3K36me) of histone H3, thereby playing a central role in histone code. This chain is Bifunctional lysine-specific demethylase and histidyl-hydroxylase NO66, found in Culex quinquefasciatus (Southern house mosquito).